Reading from the N-terminus, the 60-residue chain is UPF0337 protein asr4653 (60 aa).

The protein belongs to the UPF0337 (CsbD) family.

The protein is UPF0337 protein asr4653 of Nostoc sp. (strain PCC 7120 / SAG 25.82 / UTEX 2576).